Reading from the N-terminus, the 308-residue chain is Ribosomal RNA large subunit methyltransferase F (308 aa).

This sequence belongs to the methyltransferase superfamily. METTL16/RlmF family.

The protein resides in the cytoplasm. The catalysed reaction is adenosine(1618) in 23S rRNA + S-adenosyl-L-methionine = N(6)-methyladenosine(1618) in 23S rRNA + S-adenosyl-L-homocysteine + H(+). Its function is as follows. Specifically methylates the adenine in position 1618 of 23S rRNA. This chain is Ribosomal RNA large subunit methyltransferase F, found in Escherichia coli O6:H1 (strain CFT073 / ATCC 700928 / UPEC).